The sequence spans 440 residues: Protein arginine N-methyltransferase 2 (440 aa).

The disordered stretch occupies residues 147-194 (LSSGSEDGDEEMEVQQDDDEEAPQLVSTEDVEPTVEEPKFIPPDAKEK). Residues 152-168 (EDGDEEMEVQQDDDEEA) are compositionally biased toward acidic residues. Residues 182-194 (EEPKFIPPDAKEK) show a composition bias toward basic and acidic residues. An RMT2 domain is found at 192–440 (KEKQVTSEEY…RYAVGTSNRL (249 aa)). Residues Tyr201, Met230, 252-257 (FGMGIV), 273-275 (EAH), 310-311 (WQ), and Asp330 each bind S-adenosyl-L-methionine.

Belongs to the class I-like SAM-binding methyltransferase superfamily. RMT2 methyltransferase family. As to quaternary structure, monomer.

The protein localises to the cytoplasm. The protein resides in the nucleus. Functionally, S-adenosyl-L-methionine-dependent protein-arginine N-methyltransferase that methylates the delta-nitrogen atom of arginine residues to form N5-methylarginine (type IV) in target proteins. Monomethylates ribosomal protein L12. This chain is Protein arginine N-methyltransferase 2, found in Gibberella zeae (strain ATCC MYA-4620 / CBS 123657 / FGSC 9075 / NRRL 31084 / PH-1) (Wheat head blight fungus).